A 229-amino-acid polypeptide reads, in one-letter code: Clathrin light chain (229 aa).

Disordered regions lie at residues 1 to 24 and 76 to 132; these read MSQF…DSKN and EMQA…KLRE. Residues 107–132 show a composition bias toward basic and acidic residues; that stretch reads EPVRKWKEDQMKRIQERDESSKKLRE. Position 229 is a phosphoserine (Ser-229).

It belongs to the clathrin light chain family. As to quaternary structure, clathrin coats are formed from molecules containing 3 heavy chains and 3 light chains.

The protein resides in the cytoplasmic vesicle membrane. It is found in the membrane. It localises to the coated pit. Functionally, clathrin is the major protein of the polyhedral coat of coated pits and vesicles. The sequence is that of Clathrin light chain (clc1) from Schizosaccharomyces pombe (strain 972 / ATCC 24843) (Fission yeast).